The sequence spans 497 residues: Probable malate:quinone oxidoreductase (497 aa).

It belongs to the MQO family. It depends on FAD as a cofactor.

It carries out the reaction (S)-malate + a quinone = a quinol + oxaloacetate. The protein operates within carbohydrate metabolism; tricarboxylic acid cycle; oxaloacetate from (S)-malate (quinone route): step 1/1. This Prochlorococcus marinus subsp. pastoris (strain CCMP1986 / NIES-2087 / MED4) protein is Probable malate:quinone oxidoreductase.